The sequence spans 337 residues: MIKAGIIGASGYTGGELLRLLVNHPNVKLELATSRSLAGKPVTSTHRHLEGFLDLNYENPDSEDIRERCDVVFLAVPHGSAMNYVPELLDGNTKVVDLSADYRLETSEFEKIYGIKHSDPRNAVYGLVELHPEVAKENFVANPGCFPTGSILAAAPLAAAGLIDIAVFDSKTGISGAGISPTQNSHYPNLAENIIPYKLTAHRHRAEIVQELTGLEGKLRNINFTPHVIPSIRGIFTTAHLFTKETLSTDDLKTIYEEFYRDRPFIRFPSGVPSLTAVRGSNFCDISFEADKENNRVVVLSAIDNLVKGASGQAIQNMNLMFGLDETCGLWMPATAP.

Cys145 is a catalytic residue.

It belongs to the NAGSA dehydrogenase family. Type 1 subfamily.

Its subcellular location is the cytoplasm. It catalyses the reaction N-acetyl-L-glutamate 5-semialdehyde + phosphate + NADP(+) = N-acetyl-L-glutamyl 5-phosphate + NADPH + H(+). Its pathway is amino-acid biosynthesis; L-arginine biosynthesis; N(2)-acetyl-L-ornithine from L-glutamate: step 3/4. In terms of biological role, catalyzes the NADPH-dependent reduction of N-acetyl-5-glutamyl phosphate to yield N-acetyl-L-glutamate 5-semialdehyde. In Methanosarcina barkeri (strain Fusaro / DSM 804), this protein is N-acetyl-gamma-glutamyl-phosphate reductase.